The following is a 520-amino-acid chain: Non-specific phospholipase C6 (520 aa).

Positions 1 to 31 are cleaved as a signal peptide; the sequence is MKPSSASRFSLTFSHFLTLYCLLTQTHVAQG.

Belongs to the bacterial phospholipase C family. In terms of tissue distribution, expressed in roots, leaves, stems, flowers and siliques.

The protein localises to the secreted. This is Non-specific phospholipase C6 (NPC6) from Arabidopsis thaliana (Mouse-ear cress).